The following is a 432-amino-acid chain: SVP1-like protein 2 (432 aa).

WD repeat units lie at residues 223-263 and 268-307; these read AHKS…LLYE and LDRA…TSSG.

The protein belongs to the WD repeat PROPPIN family.

It is found in the vacuole membrane. The protein localises to the cytoplasmic vesicle membrane. In terms of biological role, involved in mitochondrial or peroxisomal functions and amino acid signaling pathways. This is SVP1-like protein 2 (HSV2) from Debaryomyces hansenii (strain ATCC 36239 / CBS 767 / BCRC 21394 / JCM 1990 / NBRC 0083 / IGC 2968) (Yeast).